The sequence spans 148 residues: 3-dehydroquinate dehydratase (148 aa).

Tyr-23 functions as the Proton acceptor in the catalytic mechanism. Positions 75, 81, and 88 each coordinate substrate. His-101 acts as the Proton donor in catalysis. Residues Met-102–Ser-103 and Arg-112 each bind substrate.

The protein belongs to the type-II 3-dehydroquinase family. Homododecamer.

It carries out the reaction 3-dehydroquinate = 3-dehydroshikimate + H2O. The protein operates within metabolic intermediate biosynthesis; chorismate biosynthesis; chorismate from D-erythrose 4-phosphate and phosphoenolpyruvate: step 3/7. Catalyzes a trans-dehydration via an enolate intermediate. The chain is 3-dehydroquinate dehydratase from Syntrophotalea carbinolica (strain DSM 2380 / NBRC 103641 / GraBd1) (Pelobacter carbinolicus).